The chain runs to 254 residues: Adenosylcobinamide-GDP ribazoletransferase (254 aa).

7 consecutive transmembrane segments (helical) span residues 27–47 (SSLYWFPVVGLVIGGIVVLFA), 50–70 (GMGAGWPELAAVLALLGGFIL), 104–124 (VGSFGSLALIGVMLFKWICLL), 131–151 (AYGMIAAGVVLSRTAQVLLAA), 170–190 (AGWPHLLVASVSGVVLLFVLL), 194–214 (VVPSSILLFGSVVALFFVGWL), and 233–253 (LVEIAVWFVAALWLKGLFSAI).

It belongs to the CobS family. Mg(2+) serves as cofactor.

The protein resides in the cell inner membrane. It carries out the reaction alpha-ribazole + adenosylcob(III)inamide-GDP = adenosylcob(III)alamin + GMP + H(+). The enzyme catalyses alpha-ribazole 5'-phosphate + adenosylcob(III)inamide-GDP = adenosylcob(III)alamin 5'-phosphate + GMP + H(+). The protein operates within cofactor biosynthesis; adenosylcobalamin biosynthesis; adenosylcobalamin from cob(II)yrinate a,c-diamide: step 7/7. Its function is as follows. Joins adenosylcobinamide-GDP and alpha-ribazole to generate adenosylcobalamin (Ado-cobalamin). Also synthesizes adenosylcobalamin 5'-phosphate from adenosylcobinamide-GDP and alpha-ribazole 5'-phosphate. The chain is Adenosylcobinamide-GDP ribazoletransferase from Chlorobaculum parvum (strain DSM 263 / NCIMB 8327) (Chlorobium vibrioforme subsp. thiosulfatophilum).